Consider the following 803-residue polypeptide: Phosphoribosylformylglycinamidine synthase subunit PurL (803 aa).

His-65 is a catalytic residue. ATP contacts are provided by Tyr-68 and Lys-107. Position 109 (Glu-109) interacts with Mg(2+). Substrate-binding positions include Ser-110–His-113 and Arg-132. The active-site Proton acceptor is the His-111. Mg(2+) is bound at residue Asp-133. Residue Gln-256 participates in substrate binding. Mg(2+) is bound at residue Asp-284. Glu-328–Gln-330 is a binding site for substrate. ATP contacts are provided by Asn-537 and Gly-574. Position 575 (Asn-575) interacts with Mg(2+). Ser-577 provides a ligand contact to substrate.

The protein belongs to the FGAMS family. As to quaternary structure, monomer. Part of the FGAM synthase complex composed of 1 PurL, 1 PurQ and 2 PurS subunits.

Its subcellular location is the cytoplasm. The enzyme catalyses N(2)-formyl-N(1)-(5-phospho-beta-D-ribosyl)glycinamide + L-glutamine + ATP + H2O = 2-formamido-N(1)-(5-O-phospho-beta-D-ribosyl)acetamidine + L-glutamate + ADP + phosphate + H(+). Its pathway is purine metabolism; IMP biosynthesis via de novo pathway; 5-amino-1-(5-phospho-D-ribosyl)imidazole from N(2)-formyl-N(1)-(5-phospho-D-ribosyl)glycinamide: step 1/2. Its function is as follows. Part of the phosphoribosylformylglycinamidine synthase complex involved in the purines biosynthetic pathway. Catalyzes the ATP-dependent conversion of formylglycinamide ribonucleotide (FGAR) and glutamine to yield formylglycinamidine ribonucleotide (FGAM) and glutamate. The FGAM synthase complex is composed of three subunits. PurQ produces an ammonia molecule by converting glutamine to glutamate. PurL transfers the ammonia molecule to FGAR to form FGAM in an ATP-dependent manner. PurS interacts with PurQ and PurL and is thought to assist in the transfer of the ammonia molecule from PurQ to PurL. This chain is Phosphoribosylformylglycinamidine synthase subunit PurL, found in Prochlorococcus marinus (strain NATL2A).